We begin with the raw amino-acid sequence, 236 residues long: 3-oxoacyl-[acyl-carrier-protein] reductase (236 aa).

The residue at position 1 (M1) is an N-acetylmethionine. NADP(+) contacts are provided by residues 11–14 (SRGI) and 34–35 (RN). Residue K40 is modified to N6-acetyllysine. NADP(+)-binding positions include D56 and 83 to 85 (AAG). N6-acetyllysine is present on K96. S134 contributes to the substrate binding site. NADP(+) contacts are provided by residues Y147, K151, and 180–182 (IRT). The active-site Proton acceptor is Y147. The residue at position 194 (K194) is an N6-acetyllysine.

The protein belongs to the short-chain dehydrogenases/reductases (SDR) family. In terms of assembly, homotetramer (in vitro). Heterotetramer with HSD17B8; contains two molecules each of HSD17B8 and CBR4. Does not form homotetramers when HSD17B8 is coexpressed, only heterotetramers (in vitro).

It localises to the mitochondrion matrix. It catalyses the reaction a (3R)-hydroxyacyl-[ACP] + NADP(+) = a 3-oxoacyl-[ACP] + NADPH + H(+). It carries out the reaction a quinone + NADPH + H(+) = a quinol + NADP(+). It participates in lipid metabolism; fatty acid biosynthesis. In terms of biological role, component of the heterotetramer complex KAR (3-ketoacyl-[acyl carrier protein] reductase or 3-ketoacyl-[ACP] reductase) that forms part of the mitochondrial fatty acid synthase (mtFAS). Beta-subunit of the KAR heterotetramer complex, responsible for the 3-ketoacyl-ACP reductase activity of the mtFAS, reduces 3-oxoacyl-[ACP] to (3R)-hydroxyacyl-[ACP] in a NADPH-dependent manner with no chain length preference, thereby participating in mitochondrial fatty acid biosynthesis. The homotetramer has NADPH-dependent quinone reductase activity (in vitro), hence could play a role in protection against cytotoxicity of exogenous quinones. As a heterotetramer, it can also reduce 9,10-phenanthrenequinone, 1,4-benzoquinone and various other o-quinones and p-quinones (in vitro). The chain is 3-oxoacyl-[acyl-carrier-protein] reductase (Cbr4) from Mus musculus (Mouse).